Consider the following 573-residue polypeptide: Adenine deaminase 2 (573 aa).

The protein belongs to the metallo-dependent hydrolases superfamily. Adenine deaminase family. Requires Mn(2+) as cofactor.

It catalyses the reaction adenine + H2O + H(+) = hypoxanthine + NH4(+). This Shouchella clausii (strain KSM-K16) (Alkalihalobacillus clausii) protein is Adenine deaminase 2.